Consider the following 381-residue polypeptide: Heme A synthase (381 aa).

A disordered region spans residues 1 to 23 (MARRPVFQEVTETTPPGTTPSGG). Positions 11-23 (TETTPPGTTPSGG) are enriched in low complexity. 8 helical membrane-spanning segments follow: residues 34–54 (GAIR…IALG), 120–140 (RLLG…FLAT), 151–171 (LLLL…MVHS), 185–205 (LATH…YVLA), 228–248 (TTGL…VAGI), 285–305 (LVQF…VVVF), 319–339 (AYVA…MNVL), and 342–362 (SPLP…TLIL). Position 290 (H290) interacts with heme. H350 is a heme binding site.

This sequence belongs to the COX15/CtaA family. Type 2 subfamily. Interacts with CtaB. Heme b is required as a cofactor.

The protein localises to the cell membrane. The catalysed reaction is Fe(II)-heme o + 2 A + H2O = Fe(II)-heme a + 2 AH2. It functions in the pathway porphyrin-containing compound metabolism; heme A biosynthesis; heme A from heme O: step 1/1. Its function is as follows. Catalyzes the conversion of heme O to heme A by two successive hydroxylations of the methyl group at C8. The first hydroxylation forms heme I, the second hydroxylation results in an unstable dihydroxymethyl group, which spontaneously dehydrates, resulting in the formyl group of heme A. The polypeptide is Heme A synthase (Paracoccus denitrificans (strain Pd 1222)).